Here is a 309-residue protein sequence, read N- to C-terminus: Pseudouridine-5'-phosphate glycosidase 2 (309 aa).

Glu26 acts as the Proton donor in catalysis. Residues Lys87 and Val107 each coordinate substrate. Asp139 contacts Mn(2+). 141–143 (SAD) lines the substrate pocket. Lys160 (nucleophile) is an active-site residue.

This sequence belongs to the pseudouridine-5'-phosphate glycosidase family. Homotrimer. It depends on Mn(2+) as a cofactor.

It catalyses the reaction D-ribose 5-phosphate + uracil = psi-UMP + H2O. Catalyzes the reversible cleavage of pseudouridine 5'-phosphate (PsiMP) to ribose 5-phosphate and uracil. Functions biologically in the cleavage direction, as part of a pseudouridine degradation pathway. This Rhizobium johnstonii (strain DSM 114642 / LMG 32736 / 3841) (Rhizobium leguminosarum bv. viciae) protein is Pseudouridine-5'-phosphate glycosidase 2.